We begin with the raw amino-acid sequence, 896 residues long: Translation initiation factor IF-2 (896 aa).

Residues 93–219 are compositionally biased toward basic and acidic residues; that stretch reads VKRDPQEAER…RMAEENEKNW (127 aa). Positions 93–307 are disordered; that stretch reads VKRDPQEAER…GSALQQGFQK (215 aa). Residues 256-271 show a composition bias toward basic residues; the sequence is GRSRSSKAARPAKKGN. Basic and acidic residues predominate over residues 272–285; the sequence is KHAESKADREEARA. Positions 395-564 constitute a tr-type G domain; that stretch reads PRAPVVTIMG…LLQAEVLELK (170 aa). A G1 region spans residues 404–411; that stretch reads GHVDHGKT. 404 to 411 provides a ligand contact to GTP; it reads GHVDHGKT. A G2 region spans residues 429–433; that stretch reads GITQH. The G3 stretch occupies residues 450–453; that stretch reads DTPG. GTP contacts are provided by residues 450–454 and 504–507; these read DTPGH and NKID. The tract at residues 504-507 is G4; sequence NKID. Positions 540 to 542 are G5; sequence SAK.

This sequence belongs to the TRAFAC class translation factor GTPase superfamily. Classic translation factor GTPase family. IF-2 subfamily.

Its subcellular location is the cytoplasm. In terms of biological role, one of the essential components for the initiation of protein synthesis. Protects formylmethionyl-tRNA from spontaneous hydrolysis and promotes its binding to the 30S ribosomal subunits. Also involved in the hydrolysis of GTP during the formation of the 70S ribosomal complex. The sequence is that of Translation initiation factor IF-2 from Klebsiella pneumoniae subsp. pneumoniae (strain ATCC 700721 / MGH 78578).